Consider the following 315-residue polypeptide: 3-chlorobenzoate-3,4-dioxygenase reductase subunit (315 aa).

1-103 (MVAIDQHDTY…GATTRISAPR (103 aa)) contacts FMN. An FAD-binding FR-type domain is found at 7-109 (HDTYSVRVIS…SAPRNAFALD (103 aa)). Residues 228–315 (NEFTVNLARS…ALSPELTLDL (88 aa)) form the 2Fe-2S ferredoxin-type domain. Residues Cys264, Cys269, Cys272, and Cys302 each coordinate [2Fe-2S] cluster.

Belongs to the PDR/VanB family. In terms of assembly, this dioxygenase system consists of two proteins: phthalate oxygenase and phthalate oxygenase reductase. It depends on FMN as a cofactor.

The sequence is that of 3-chlorobenzoate-3,4-dioxygenase reductase subunit (cbaB) from Comamonas testosteroni (Pseudomonas testosteroni).